Consider the following 804-residue polypeptide: Phenylalanine--tRNA ligase beta subunit (804 aa).

Residues 38 to 148 (RSYLKGFVIA…EDVPIGASFA (111 aa)) enclose the tRNA-binding domain. One can recognise a B5 domain in the interval 401–476 (PEIRQITFPL…RIYGLDKIKP (76 aa)). D454, D460, E463, and E464 together coordinate Mg(2+). The region spanning 710-803 (SSLQMVRRDF…VTRMTGASLR (94 aa)) is the FDX-ACB domain.

This sequence belongs to the phenylalanyl-tRNA synthetase beta subunit family. Type 1 subfamily. Tetramer of two alpha and two beta subunits. It depends on Mg(2+) as a cofactor.

The protein resides in the cytoplasm. The catalysed reaction is tRNA(Phe) + L-phenylalanine + ATP = L-phenylalanyl-tRNA(Phe) + AMP + diphosphate + H(+). In Bartonella henselae (strain ATCC 49882 / DSM 28221 / CCUG 30454 / Houston 1) (Rochalimaea henselae), this protein is Phenylalanine--tRNA ligase beta subunit.